The primary structure comprises 680 residues: DNA ligase (680 aa).

Residues 44–48, 94–95, and Glu124 contribute to the NAD(+) site; these read DYIYD and SL. The N6-AMP-lysine intermediate role is filled by Lys126. NAD(+)-binding residues include Arg147, Glu181, Lys297, and Lys321. Positions 415, 418, 433, and 438 each coordinate Zn(2+). The region spanning 598–680 is the BRCT domain; that stretch reads DENSFFYGKK…VDEQVKEDGK (83 aa).

Belongs to the NAD-dependent DNA ligase family. LigA subfamily. Requires Mg(2+) as cofactor. The cofactor is Mn(2+).

The enzyme catalyses NAD(+) + (deoxyribonucleotide)n-3'-hydroxyl + 5'-phospho-(deoxyribonucleotide)m = (deoxyribonucleotide)n+m + AMP + beta-nicotinamide D-nucleotide.. Functionally, DNA ligase that catalyzes the formation of phosphodiester linkages between 5'-phosphoryl and 3'-hydroxyl groups in double-stranded DNA using NAD as a coenzyme and as the energy source for the reaction. It is essential for DNA replication and repair of damaged DNA. The chain is DNA ligase from Leuconostoc mesenteroides subsp. mesenteroides (strain ATCC 8293 / DSM 20343 / BCRC 11652 / CCM 1803 / JCM 6124 / NCDO 523 / NBRC 100496 / NCIMB 8023 / NCTC 12954 / NRRL B-1118 / 37Y).